Here is a 665-residue protein sequence, read N- to C-terminus: Fructose-1,6-bisphosphatase class 3 (665 aa).

This sequence belongs to the FBPase class 3 family. Requires Mn(2+) as cofactor.

The enzyme catalyses beta-D-fructose 1,6-bisphosphate + H2O = beta-D-fructose 6-phosphate + phosphate. It functions in the pathway carbohydrate biosynthesis; gluconeogenesis. The chain is Fructose-1,6-bisphosphatase class 3 from Alkaliphilus metalliredigens (strain QYMF).